Consider the following 199-residue polypeptide: Oligoribonuclease (199 aa).

One can recognise an Exonuclease domain in the interval 5–170 (LVWIDCEMTG…ADIRESIREL (166 aa)). Tyrosine 127 is an active-site residue.

The protein belongs to the oligoribonuclease family.

The protein localises to the cytoplasm. In terms of biological role, 3'-to-5' exoribonuclease specific for small oligoribonucleotides. The chain is Oligoribonuclease from Rhodococcus jostii (strain RHA1).